We begin with the raw amino-acid sequence, 277 residues long: Hydroxyethylthiazole kinase (277 aa).

Met-56 provides a ligand contact to substrate. ATP contacts are provided by Arg-131 and Thr-177. Position 204 (Ala-204) interacts with substrate.

It belongs to the Thz kinase family. The cofactor is Mg(2+).

The catalysed reaction is 5-(2-hydroxyethyl)-4-methylthiazole + ATP = 4-methyl-5-(2-phosphooxyethyl)-thiazole + ADP + H(+). Its pathway is cofactor biosynthesis; thiamine diphosphate biosynthesis; 4-methyl-5-(2-phosphoethyl)-thiazole from 5-(2-hydroxyethyl)-4-methylthiazole: step 1/1. Catalyzes the phosphorylation of the hydroxyl group of 4-methyl-5-beta-hydroxyethylthiazole (THZ). The polypeptide is Hydroxyethylthiazole kinase (Gemmatimonas aurantiaca (strain DSM 14586 / JCM 11422 / NBRC 100505 / T-27)).